Consider the following 417-residue polypeptide: MQSKNYFRKGFGLKAEVQDDLKAEYESSLIHEIRANGYTLRRGGVTVRLAEAFGFCWGVDKAVSMAYETHRMFAGRQLWITNEIIHNPLVNQHLRAMGIRFLDEDESGRRVPKDFERVSEKDVVILPAFGASTQEMQILDEKNCVIVDTTCPWVSAVWNRVGKYDRAEFTSIIHGKYQHEETVATASRARRYLVVLNLEEAQQVCDYILHGGDRRAFLAHFGMAACEGFDPDRDLVRVGIANQTTMLKGETERIGKLFERTMMRRYGPANLADHFMSHDTICDATQERQDAMFKLVEEPLDLLVVIGGYNSSNTTHLQEIAVERGLPSFHIDGADRLVSAQFIEHRDLHSKSLVRTKNWLPAGEVTVGVTAGASTPDRVVAEVIARIFELKGVGESGATGAISSPVLSSAEGGPSLS.

Position 56 (Cys56) interacts with [4Fe-4S] cluster. Residue His86 participates in (2E)-4-hydroxy-3-methylbut-2-enyl diphosphate binding. Residue His86 coordinates dimethylallyl diphosphate. His86 is a binding site for isopentenyl diphosphate. Residue Cys151 coordinates [4Fe-4S] cluster. (2E)-4-hydroxy-3-methylbut-2-enyl diphosphate is bound at residue His179. His179 contributes to the dimethylallyl diphosphate binding site. His179 serves as a coordination point for isopentenyl diphosphate. Catalysis depends on Glu181, which acts as the Proton donor. Thr244 contributes to the (2E)-4-hydroxy-3-methylbut-2-enyl diphosphate binding site. [4Fe-4S] cluster is bound at residue Cys282. Residues Ser311, Ser312, Asn313, and Ser374 each coordinate (2E)-4-hydroxy-3-methylbut-2-enyl diphosphate. 4 residues coordinate dimethylallyl diphosphate: Ser311, Ser312, Asn313, and Ser374. Residues Ser311, Ser312, Asn313, and Ser374 each coordinate isopentenyl diphosphate.

This sequence belongs to the IspH family. Requires [4Fe-4S] cluster as cofactor.

It catalyses the reaction isopentenyl diphosphate + 2 oxidized [2Fe-2S]-[ferredoxin] + H2O = (2E)-4-hydroxy-3-methylbut-2-enyl diphosphate + 2 reduced [2Fe-2S]-[ferredoxin] + 2 H(+). The catalysed reaction is dimethylallyl diphosphate + 2 oxidized [2Fe-2S]-[ferredoxin] + H2O = (2E)-4-hydroxy-3-methylbut-2-enyl diphosphate + 2 reduced [2Fe-2S]-[ferredoxin] + 2 H(+). The protein operates within isoprenoid biosynthesis; dimethylallyl diphosphate biosynthesis; dimethylallyl diphosphate from (2E)-4-hydroxy-3-methylbutenyl diphosphate: step 1/1. Its pathway is isoprenoid biosynthesis; isopentenyl diphosphate biosynthesis via DXP pathway; isopentenyl diphosphate from 1-deoxy-D-xylulose 5-phosphate: step 6/6. Functionally, catalyzes the conversion of 1-hydroxy-2-methyl-2-(E)-butenyl 4-diphosphate (HMBPP) into a mixture of isopentenyl diphosphate (IPP) and dimethylallyl diphosphate (DMAPP). Acts in the terminal step of the DOXP/MEP pathway for isoprenoid precursor biosynthesis. The polypeptide is 4-hydroxy-3-methylbut-2-enyl diphosphate reductase (Gloeobacter violaceus (strain ATCC 29082 / PCC 7421)).